The chain runs to 458 residues: Chondroitin hydrolase (458 aa).

Positions 1 to 22 (MVIVWYHQLLLVLLIFIGAAKG) are cleaved as a signal peptide. The 44-residue stretch at 358 to 401 (NLDKCRMERCEGRGECYLPRPKTNPAIYNFACRCERPYFGKSCE) folds into the EGF-like domain. 3 disulfides stabilise this stretch: cysteine 362/cysteine 373, cysteine 367/cysteine 389, and cysteine 391/cysteine 400.

The protein belongs to the glycosyl hydrolase 56 family.

Functionally, endo-beta-galactosaminidase that specifically hydrolyzes chondroitin, releasing GlcUA-beta-(1-&gt;3)-GalNAc-beta-(1-&gt;4)-GlcUA-beta-(1-&gt;3)-GalNAc as the main product. Also hydrolyzes to a lesser extent chondroitin sulfates (CS-A, CS-C) and hyaluronic acid. May regulate the function of chondroitin in cell division. In Caenorhabditis elegans, this protein is Chondroitin hydrolase.